The following is a 1340-amino-acid chain: WASH complex subunit 2 (1340 aa).

A sufficient for interaction with WASHC3, WASHC4 and WASHC5; required for interaction with WASHC1 region spans residues 1–219; that stretch reads MNRTTPDQEL…VGSDRGSIVD (219 aa). Serine 157, serine 159, serine 204, serine 205, and serine 209 each carry phosphoserine. Over residues 201–213 the composition is skewed to low complexity; sequence GELSSEEGSVGSD. A disordered region spans residues 201-404; the sequence is GELSSEEGSV…SSSKPGKKIP (204 aa). The segment covering 219–231 has biased composition (acidic residues); it reads DTEEEKEEEESDE. The segment covering 232 to 241 has biased composition (basic and acidic residues); sequence DFAHHSDNDQ. 2 stretches are compositionally biased toward acidic residues: residues 249 to 258 and 265 to 275; these read SDEEEDDDGC and EKEEEDIEDIE. Serine 287 is subject to Phosphoserine. Basic and acidic residues predominate over residues 292-306; the sequence is LAARIKGDAVGRVDE. Threonine 330 bears the Phosphothreonine mark. Residues 354–365 are compositionally biased toward gly residues; sequence GSGGGLFSGGKG. Residues 355-599 form a sufficient for interaction with CCDC93 region; that stretch reads SGGGLFSGGK…QTLSLQAQGE (245 aa). An interaction with VPS35 region spans residues 356–1340; the sequence is GGGLFSGGKG…DDPLNAFGGQ (985 aa). The LFa 1 motif lies at 366 to 377; sequence LFDDEDEESDLF. Phosphoserine is present on residues serine 394 and serine 396. Short sequence motifs (LFa) lie at residues 410-418, 449-462, and 481-490; these read VFLGDTDVF, LFDD…DDFF, and IFGDDEGDLF. 3 disordered regions span residues 421 to 586, 618 to 663, and 695 to 838; these read ASVP…GGTA, SSDE…KASL, and DSGG…STGV. Over residues 450 to 461 the composition is skewed to acidic residues; that stretch reads FDDDDGDDDDDF. Basic and acidic residues predominate over residues 506–516; the sequence is DENKARAEKKV. The span at 517–527 shows a compositional bias: low complexity; that stretch reads SLPSSKNLKPS. 3 consecutive short sequence motifs (LFa) follow at residues 536–547, 571–582, and 616–628; these read LFSDEEDSEDLF, LFEDEDEEDNLF, and LFSS…WNIP. Phosphoserine is present on residues serine 538 and serine 543. Residues 546–566 show a composition bias toward low complexity; sequence LFSSQSASKLKGAPLLPGKLP. Phosphoserine is present on residues serine 618 and serine 619. Basic and acidic residues predominate over residues 636–646; that stretch reads SDSRSKGESRD. Short sequence motifs (LFa) lie at residues 663–673, 689–701, and 725–737; these read LFEEDEEDDLF, LFED…GSLF, and LFSD…AQLG. A phosphoserine mark is found at serine 727, serine 751, serine 786, and serine 801. Over residues 740-767 the composition is skewed to basic and acidic residues; it reads PVDKKVESAKESLKFGRTDVAESEKEGL. Positions 802-816 match the LFa 11 motif; it reads LFDEEEDKMEDQNTI. Residues 822 to 833 are compositionally biased toward basic and acidic residues; that stretch reads EVGKGRDPDARP. 2 consecutive short sequence motifs (LFa) follow at residues 838-846 and 855-861; these read VFQDEELLF and DPDVDLF. Phosphoserine occurs at positions 873 and 876. The LFa 14 motif lies at 877 to 887; sequence LFGDDEDDDLF. Disordered regions lie at residues 906 to 950 and 987 to 1205; these read DYSV…KEPS and FPSS…EDED. A compositionally biased stretch (basic and acidic residues) spans 916–930; the sequence is KHPETIQGIKEKGIW. The interval 936 to 1340 is interaction with phospholipids; the sequence is QDSSGLAPFK…DDPLNAFGGQ (405 aa). A compositionally biased stretch (basic residues) spans 1027-1045; the sequence is NKSRVKMRGKRRPQTRAAR. Residues 1028 to 1046 are required for interaction with F-actin-capping protein subunit alpha (CAPZA1 or CAPZA2 or CAPZA3); the sequence is KSRVKMRGKRRPQTRAARR. Phosphoserine occurs at positions 1053 and 1086. A compositionally biased stretch (low complexity) spans 1093 to 1109; the sequence is EALAAAAAPWEGGPVPG. Residue serine 1113 is modified to Phosphoserine. 6 consecutive short sequence motifs (LFa) follow at residues 1128–1135, 1170–1184, 1200–1208, 1233–1239, 1261–1269, and 1289–1298; these read LFDSGDIF, MFPA…DDLF, LLEDEDDLF, IFEDDIF, LFDDNIDIF, and IFDDDMDDIF. Phosphoserine occurs at positions 1178 and 1179. Residues 1301–1325 form a disordered region; the sequence is GIQAKTAKPKSRSAQAAPEPRFEHK. The LFa 21 signature appears at 1329 to 1337; the sequence is IFDDPLNAF.

This sequence belongs to the FAM21 family. In terms of assembly, component of the WASH core complex also described as WASH regulatory complex (SHRC) composed of WASHC1, WASHC2, WASHC3, WASHC4 and WASHC5; in the complex interacts (via N-terminus) directly with WASHC1. The WASH core complex associates with the F-actin-capping protein dimer (formed by CAPZA1, CAPZA2 or CAPZA3 and CAPZB) in a transient or substoichiometric manner which was initially described as WASH complex. Interacts with VPS35; mediates the association with the retromer CSC complex. Interacts with FKBP15. Interacts with CCDC93, CCDC22, VPS35L; indicative for an association of the WASH core complex with the CCC and retriever complexes. Directly interacts with TBC1D23.

It is found in the early endosome membrane. Its subcellular location is the cell membrane. Functionally, acts as a component of the WASH core complex that functions as a nucleation-promoting factor (NPF) at the surface of endosomes, where it recruits and activates the Arp2/3 complex to induce actin polymerization, playing a key role in the fission of tubules that serve as transport intermediates during endosome sorting. Mediates the recruitment of the WASH core complex to endosome membranes via binding to phospholipids and VPS35 of the retromer CSC. Mediates the recruitment of the F-actin-capping protein dimer to the WASH core complex probably promoting localized F-actin polymerization needed for vesicle scission. Via its C-terminus binds various phospholipids, most strongly phosphatidylinositol 4-phosphate (PtdIns-(4)P), phosphatidylinositol 5-phosphate (PtdIns-(5)P) and phosphatidylinositol 3,5-bisphosphate (PtdIns-(3,5)P2). Involved in the endosome-to-plasma membrane trafficking and recycling of SNX27-retromer-dependent cargo proteins, such as GLUT1. Required for the association of DNAJC13, ENTR1, ANKRD50 with retromer CSC subunit VPS35. Required for the endosomal recruitment of CCC and retriever complexes subunits COMMD1 and CCDC93 as well as the retrievere complex subunit VPS35L. The sequence is that of WASH complex subunit 2 from Pongo abelii (Sumatran orangutan).